A 158-amino-acid polypeptide reads, in one-letter code: C-type lectin BfL-2 (158 aa).

An N-terminal signal peptide occupies residues 1-21 (MGHFTFIGLCLLAMFLSLSGA). 4 cysteine pairs are disulfide-bonded: cysteine 26-cysteine 37, cysteine 54-cysteine 154, cysteine 61-cysteine 156, and cysteine 129-cysteine 146. A C-type lectin domain is found at 33–155 (KNGLCYKVFS…CETLHPFICQ (123 aa)). Residues 119–121 (EPN) carry the Mannose-binding motif. An N-linked (GlcNAc...) asparagine glycan is attached at asparagine 121. Ca(2+) contacts are provided by glutamate 127, asparagine 142, and aspartate 143.

This sequence belongs to the true venom lectin family. As to quaternary structure, homodimer; non-covalently linked. In terms of tissue distribution, expressed by the venom gland.

The protein resides in the secreted. Mannose-binding lectin which recognizes specific carbohydrate structures and agglutinates a variety of animal cells by binding to cell-surface glycoproteins and glycolipids. May be a calcium-dependent lectin. The sequence is that of C-type lectin BfL-2 from Bungarus fasciatus (Banded krait).